Here is a 261-residue protein sequence, read N- to C-terminus: EKC/KEOPS complex subunit BUD32 (261 aa).

Positions 16 to 261 (DVDIAPISQG…LRGRKRSMLG (246 aa)) constitute a Protein kinase domain. ATP contacts are provided by residues 22–30 (ISQGAEAIV) and K43. D161 acts as the Proton acceptor in catalysis. 2 positions are modified to phosphoserine; by autocatalysis: S187 and S189.

This sequence belongs to the protein kinase superfamily. BUD32 family. Component of the EKC/KEOPS complex composed of at least BUD32, CGI121, GON7, KAE1 and PCC1; the whole complex dimerizes.

The protein localises to the cytoplasm. The protein resides in the nucleus. It is found in the chromosome. Its subcellular location is the telomere. The enzyme catalyses L-seryl-[protein] + ATP = O-phospho-L-seryl-[protein] + ADP + H(+). The catalysed reaction is L-threonyl-[protein] + ATP = O-phospho-L-threonyl-[protein] + ADP + H(+). Component of the EKC/KEOPS complex that is required for the formation of a threonylcarbamoyl group on adenosine at position 37 (t(6)A37) in tRNAs that read codons beginning with adenine. The complex is probably involved in the transfer of the threonylcarbamoyl moiety of threonylcarbamoyl-AMP (TC-AMP) to the N6 group of A37. BUD32 has ATPase activity in the context of the EKC/KEOPS complex and likely plays a supporting role to the catalytic subunit KAE1. The EKC/KEOPS complex also promotes both telomere uncapping and telomere elongation. The complex is required for efficient recruitment of transcriptional coactivators. Important for bud site selection. This chain is EKC/KEOPS complex subunit BUD32 (BUD32), found in Saccharomyces cerevisiae (strain ATCC 204508 / S288c) (Baker's yeast).